The sequence spans 75 residues: Cruzioseptin-7 (75 aa).

The first 22 residues, 1–22 (MAKLKKSLFLVLFLGLVSLSIC), serve as a signal peptide directing secretion. Residues 23 to 43 (EEEKREEENEEVQEDDDQSEE) constitute a propeptide that is removed on maturation. A disordered region spans residues 25-44 (EKREEENEEVQEDDDQSEEK). The segment covering 30–41 (ENEEVQEDDDQS) has biased composition (acidic residues).

As to expression, expressed by the skin glands.

The protein localises to the secreted. In terms of biological role, has antimicrobial activity. This is Cruzioseptin-7 from Cruziohyla calcarifer (Splendid leaf frog).